The following is a 115-amino-acid chain: NADH-ubiquinone oxidoreductase chain 3 (115 aa).

The next 3 membrane-spanning stretches (helical) occupy residues 3-23 (LMLTLFINTSLASVLVLIAFW), 55-75 (FFLVAITFLLFDLEIALLLPL), and 86-106 (TMLTMALILISLLAASLAYEW).

It belongs to the complex I subunit 3 family. As to quaternary structure, core subunit of respiratory chain NADH dehydrogenase (Complex I) which is composed of 45 different subunits. Interacts with TMEM186. Interacts with TMEM242.

It is found in the mitochondrion inner membrane. It catalyses the reaction a ubiquinone + NADH + 5 H(+)(in) = a ubiquinol + NAD(+) + 4 H(+)(out). In terms of biological role, core subunit of the mitochondrial membrane respiratory chain NADH dehydrogenase (Complex I) which catalyzes electron transfer from NADH through the respiratory chain, using ubiquinone as an electron acceptor. Essential for the catalytic activity of complex I. The protein is NADH-ubiquinone oxidoreductase chain 3 of Ceratotherium simum (White rhinoceros).